The sequence spans 231 residues: Thiamine import ATP-binding protein ThiQ (231 aa).

The ABC transporter domain occupies 2–230 (LRLEDLDIRK…PPPALRGYLG (229 aa)). 32-39 (GPSGAGKS) is an ATP binding site.

The protein belongs to the ABC transporter superfamily. Thiamine importer (TC 3.A.1.19.1) family. As to quaternary structure, the complex is composed of two ATP-binding proteins (ThiQ), two transmembrane proteins (ThiP) and a solute-binding protein (ThiB).

Its subcellular location is the cell inner membrane. The enzyme catalyses thiamine(out) + ATP + H2O = thiamine(in) + ADP + phosphate + H(+). Part of the ABC transporter complex ThiBPQ involved in thiamine import. Responsible for energy coupling to the transport system. The sequence is that of Thiamine import ATP-binding protein ThiQ from Ruegeria sp. (strain TM1040) (Silicibacter sp.).